A 198-amino-acid polypeptide reads, in one-letter code: Putative 3-methyladenine DNA glycosylase (198 aa).

This sequence belongs to the DNA glycosylase MPG family.

The chain is Putative 3-methyladenine DNA glycosylase from Natranaerobius thermophilus (strain ATCC BAA-1301 / DSM 18059 / JW/NM-WN-LF).